Reading from the N-terminus, the 347-residue chain is Protease HtpX homolog (347 aa).

4 helical membrane passes run 8-28 (VALGLYIVGYIFMLIIAATIA), 44-64 (AMALTAVLVVLTTAFIIYLFV), 76-96 (LSFLLGLIFFVVLMNIITYFA), and 141-163 (AFAYGNFLTGRYVAVTSSMLALT). Histidine 174 is a Zn(2+) binding site. The active site involves glutamate 175. Histidine 178 provides a ligand contact to Zn(2+). The next 2 membrane-spanning stretches (helical) occupy residues 185 to 205 (AIMLLFGILPSIVYYLGVTAV) and 221 to 241 (ILAAVGIAAVIVSFLIQLLVL). Glutamate 248 provides a ligand contact to Zn(2+).

It belongs to the peptidase M48B family. Zn(2+) serves as cofactor.

It is found in the cell membrane. The sequence is that of Protease HtpX homolog from Pyrobaculum aerophilum (strain ATCC 51768 / DSM 7523 / JCM 9630 / CIP 104966 / NBRC 100827 / IM2).